We begin with the raw amino-acid sequence, 105 residues long: Nucleoid-associated protein Sca_0120 (105 aa).

A disordered region spans residues 1 to 36 (MRGGGNMQQMMKQMQKMQKKMAEEQEKLKDEKVEGS). A compositionally biased stretch (low complexity) spans 7-16 (MQQMMKQMQK). The span at 20–34 (KMAEEQEKLKDEKVE) shows a compositional bias: basic and acidic residues.

Belongs to the YbaB/EbfC family. Homodimer.

It is found in the cytoplasm. The protein localises to the nucleoid. Functionally, binds to DNA and alters its conformation. May be involved in regulation of gene expression, nucleoid organization and DNA protection. The sequence is that of Nucleoid-associated protein Sca_0120 from Staphylococcus carnosus (strain TM300).